Here is a 336-residue protein sequence, read N- to C-terminus: Holliday junction branch migration complex subunit RuvB (336 aa).

Residues 4–184 are large ATPase domain (RuvB-L); it reads ADRLISAGTT…FGIVQRLEFY (181 aa). ATP-binding positions include Ile23, Arg24, Gly65, Lys68, Thr69, Thr70, 131-133, Arg174, Tyr184, and Arg221; that span reads EDY. Thr69 is a Mg(2+) binding site. Positions 185–255 are small ATPAse domain (RuvB-S); sequence QVPDLQYIVS…IAAQALDMLN (71 aa). Positions 258 to 336 are head domain (RuvB-H); sequence AEGFDYMDRK…HFGITPPEMP (79 aa). The DNA site is built by Arg294, Arg313, and Arg318.

The protein belongs to the RuvB family. As to quaternary structure, homohexamer. Forms an RuvA(8)-RuvB(12)-Holliday junction (HJ) complex. HJ DNA is sandwiched between 2 RuvA tetramers; dsDNA enters through RuvA and exits via RuvB. An RuvB hexamer assembles on each DNA strand where it exits the tetramer. Each RuvB hexamer is contacted by two RuvA subunits (via domain III) on 2 adjacent RuvB subunits; this complex drives branch migration. In the full resolvosome a probable DNA-RuvA(4)-RuvB(12)-RuvC(2) complex forms which resolves the HJ.

It localises to the cytoplasm. It catalyses the reaction ATP + H2O = ADP + phosphate + H(+). In terms of biological role, the RuvA-RuvB-RuvC complex processes Holliday junction (HJ) DNA during genetic recombination and DNA repair, while the RuvA-RuvB complex plays an important role in the rescue of blocked DNA replication forks via replication fork reversal (RFR). RuvA specifically binds to HJ cruciform DNA, conferring on it an open structure. The RuvB hexamer acts as an ATP-dependent pump, pulling dsDNA into and through the RuvAB complex. RuvB forms 2 homohexamers on either side of HJ DNA bound by 1 or 2 RuvA tetramers; 4 subunits per hexamer contact DNA at a time. Coordinated motions by a converter formed by DNA-disengaged RuvB subunits stimulates ATP hydrolysis and nucleotide exchange. Immobilization of the converter enables RuvB to convert the ATP-contained energy into a lever motion, pulling 2 nucleotides of DNA out of the RuvA tetramer per ATP hydrolyzed, thus driving DNA branch migration. The RuvB motors rotate together with the DNA substrate, which together with the progressing nucleotide cycle form the mechanistic basis for DNA recombination by continuous HJ branch migration. Branch migration allows RuvC to scan DNA until it finds its consensus sequence, where it cleaves and resolves cruciform DNA. In Escherichia coli (strain ATCC 8739 / DSM 1576 / NBRC 3972 / NCIMB 8545 / WDCM 00012 / Crooks), this protein is Holliday junction branch migration complex subunit RuvB.